The sequence spans 144 residues: Large ribosomal subunit protein uL16 (144 aa).

The protein belongs to the universal ribosomal protein uL16 family. As to quaternary structure, part of the 50S ribosomal subunit.

Functionally, binds 23S rRNA and is also seen to make contacts with the A and possibly P site tRNAs. In Clostridium botulinum (strain Alaska E43 / Type E3), this protein is Large ribosomal subunit protein uL16.